The sequence spans 333 residues: L-lactate dehydrogenase A chain (333 aa).

NAD(+)-binding positions include 30 to 58 (GMVGMAAAVSILLKDLTDELALVDVMEDK) and arginine 100. The substrate site is built by arginine 107, asparagine 139, and arginine 170. Asparagine 139 is a binding site for NAD(+). Histidine 194 serves as the catalytic Proton acceptor. Threonine 249 is a substrate binding site.

Belongs to the LDH/MDH superfamily. LDH family. Homotetramer.

The protein resides in the cytoplasm. The catalysed reaction is (S)-lactate + NAD(+) = pyruvate + NADH + H(+). It participates in fermentation; pyruvate fermentation to lactate; (S)-lactate from pyruvate: step 1/1. Interconverts simultaneously and stereospecifically pyruvate and lactate with concomitant interconversion of NADH and NAD(+). This chain is L-lactate dehydrogenase A chain (ldha), found in Danio rerio (Zebrafish).